A 792-amino-acid chain; its full sequence is Probable CoA-transferase Rv1866 (792 aa).

The active-site Nucleophile is the Asp558.

This sequence belongs to the CoA-transferase III family.

Its function is as follows. Probable CoA-transferase. This chain is Probable CoA-transferase Rv1866, found in Mycobacterium tuberculosis (strain ATCC 25618 / H37Rv).